Consider the following 358-residue polypeptide: ATP synthase gamma chain, chloroplastic (358 aa).

The transit peptide at 1-35 (MAAMLASKQGAFMGRSSFAPAPKGVASRGSLQVVA) directs the protein to the chloroplast. Cys123 is an active-site residue. Cys233 and Cys239 form a disulfide bridge.

This sequence belongs to the ATPase gamma chain family. F-type ATPases have 2 components, F(1) - the catalytic core - and F(0) - the membrane proton channel. F(1) has five subunits: alpha(3), beta(3), gamma(1), delta(1), epsilon(1). F(0) has four main subunits: a(1), b(1), b'(1) and c(10-14). The alpha and beta chains form an alternating ring which encloses part of the gamma chain. F(1) is attached to F(0) by a central stalk formed by the gamma and epsilon chains, while a peripheral stalk is formed by the delta, b and b' chains.

The protein resides in the plastid. It localises to the chloroplast thylakoid membrane. F(1)F(0) ATP synthase produces ATP from ADP in the presence of a proton or sodium gradient. F-type ATPases consist of two structural domains, F(1) containing the extramembraneous catalytic core and F(0) containing the membrane proton channel, linked together by a central stalk and a peripheral stalk. During catalysis, ATP synthesis in the catalytic domain of F(1) is coupled via a rotary mechanism of the central stalk subunits to proton translocation. Functionally, produces ATP from ADP in the presence of a proton gradient across the membrane. The gamma chain is believed to be important in regulating ATPase activity and the flow of protons through the CF(0) complex. This chain is ATP synthase gamma chain, chloroplastic, found in Chlamydomonas reinhardtii (Chlamydomonas smithii).